The chain runs to 618 residues: 1-deoxy-D-xylulose-5-phosphate synthase (618 aa).

Residues H70 and 111 to 113 (GHS) contribute to the thiamine diphosphate site. D142 contributes to the Mg(2+) binding site. Residues 143 to 144 (GS), N171, Y278, and E360 each bind thiamine diphosphate. Position 171 (N171) interacts with Mg(2+).

Belongs to the transketolase family. DXPS subfamily. As to quaternary structure, homodimer. The cofactor is Mg(2+). It depends on thiamine diphosphate as a cofactor.

It carries out the reaction D-glyceraldehyde 3-phosphate + pyruvate + H(+) = 1-deoxy-D-xylulose 5-phosphate + CO2. It participates in metabolic intermediate biosynthesis; 1-deoxy-D-xylulose 5-phosphate biosynthesis; 1-deoxy-D-xylulose 5-phosphate from D-glyceraldehyde 3-phosphate and pyruvate: step 1/1. Functionally, catalyzes the acyloin condensation reaction between C atoms 2 and 3 of pyruvate and glyceraldehyde 3-phosphate to yield 1-deoxy-D-xylulose-5-phosphate (DXP). The chain is 1-deoxy-D-xylulose-5-phosphate synthase from Helicobacter pylori (strain G27).